We begin with the raw amino-acid sequence, 264 residues long: TLC domain-containing protein 2 (264 aa).

6 consecutive transmembrane segments (helical) span residues 3–23 (PTGL…HWGL), 42–62 (LCVS…GLSL), 77–97 (WALV…ADLL), 114–134 (VVVS…FSMV), 169–189 (SLAT…LWLF), and 199–219 (LVTL…ILGI). In terms of domain architecture, TLC spans 34-227 (RDRWQWWNLC…GIRILVNDVL (194 aa)). The segment at 230–264 (RPHPPSPGHEKTRGTRTRRDNGPVTSNSSTLSLKD) is disordered. Basic and acidic residues predominate over residues 237–250 (GHEKTRGTRTRRDN). Residues 252–264 (PVTSNSSTLSLKD) are compositionally biased toward polar residues.

This sequence belongs to the TLCD family.

Its subcellular location is the cell membrane. Regulates the composition and fluidity of the plasma membrane. Inhibits the incorporation of membrane-fluidizing phospholipids containing omega-3 long-chain polyunsaturated fatty acids (LCPUFA) and thereby promotes membrane rigidity. Does not appear to have any effect on LCPUFA synthesis. This chain is TLC domain-containing protein 2 (TLCD2), found in Homo sapiens (Human).